Reading from the N-terminus, the 293-residue chain is 4-hydroxy-tetrahydrodipicolinate synthase (293 aa).

Thr-45 contacts pyruvate. Tyr-133 acts as the Proton donor/acceptor in catalysis. Lys-162 (schiff-base intermediate with substrate) is an active-site residue. Ile-204 is a pyruvate binding site.

This sequence belongs to the DapA family. Homotetramer; dimer of dimers.

The protein localises to the cytoplasm. The catalysed reaction is L-aspartate 4-semialdehyde + pyruvate = (2S,4S)-4-hydroxy-2,3,4,5-tetrahydrodipicolinate + H2O + H(+). The protein operates within amino-acid biosynthesis; L-lysine biosynthesis via DAP pathway; (S)-tetrahydrodipicolinate from L-aspartate: step 3/4. Functionally, catalyzes the condensation of (S)-aspartate-beta-semialdehyde [(S)-ASA] and pyruvate to 4-hydroxy-tetrahydrodipicolinate (HTPA). The polypeptide is 4-hydroxy-tetrahydrodipicolinate synthase (Chelativorans sp. (strain BNC1)).